Here is a 766-residue protein sequence, read N- to C-terminus: LPS-assembly protein LptD (766 aa).

Residues 1–18 (MQIRYFLALSLLPNIVLA) form the signal peptide.

It belongs to the LptD family. In terms of assembly, component of the lipopolysaccharide transport and assembly complex. Interacts with LptE and LptA.

It localises to the cell outer membrane. Functionally, together with LptE, is involved in the assembly of lipopolysaccharide (LPS) at the surface of the outer membrane. The polypeptide is LPS-assembly protein LptD (Shewanella frigidimarina (strain NCIMB 400)).